The chain runs to 697 residues: Polyribonucleotide nucleotidyltransferase (697 aa).

Positions 488 and 494 each coordinate Mg(2+). Residues 555–614 form the KH domain; it reads PTLLTLKINPDKIRDVIGKGGATIRALTEETGCTIDIEDDGSVKIYGETREKADEAVRRV. The region spanning 624 to 692 is the S1 motif domain; that stretch reads GAIYEGKVTR…QRGRIKLSMK (69 aa).

It belongs to the polyribonucleotide nucleotidyltransferase family. Component of the RNA degradosome, which is a multiprotein complex involved in RNA processing and mRNA degradation. Mg(2+) serves as cofactor.

It localises to the cytoplasm. The enzyme catalyses RNA(n+1) + phosphate = RNA(n) + a ribonucleoside 5'-diphosphate. Its function is as follows. Involved in mRNA degradation. Catalyzes the phosphorolysis of single-stranded polyribonucleotides processively in the 3'- to 5'-direction. The polypeptide is Polyribonucleotide nucleotidyltransferase (Alcanivorax borkumensis (strain ATCC 700651 / DSM 11573 / NCIMB 13689 / SK2)).